The primary structure comprises 206 residues: N-(5'-phosphoribosyl)anthranilate isomerase (206 aa).

Belongs to the TrpF family.

The enzyme catalyses N-(5-phospho-beta-D-ribosyl)anthranilate = 1-(2-carboxyphenylamino)-1-deoxy-D-ribulose 5-phosphate. It functions in the pathway amino-acid biosynthesis; L-tryptophan biosynthesis; L-tryptophan from chorismate: step 3/5. This chain is N-(5'-phosphoribosyl)anthranilate isomerase, found in Pseudomonas syringae pv. syringae (strain B728a).